The chain runs to 174 residues: 2-C-methyl-D-erythritol 2,4-cyclodiphosphate synthase (174 aa).

A divalent metal cation is bound by residues D13, H15, and H61. Residue 13-15 participates in 4-CDP-2-C-methyl-D-erythritol 2-phosphate binding; sequence DAH. 4-CDP-2-C-methyl-D-erythritol 2-phosphate-binding positions include 75 to 77, 149 to 152, F156, and H159; these read DIG and TTTD.

The protein belongs to the IspF family. As to quaternary structure, homotrimer. Requires a divalent metal cation as cofactor.

The enzyme catalyses 4-CDP-2-C-methyl-D-erythritol 2-phosphate = 2-C-methyl-D-erythritol 2,4-cyclic diphosphate + CMP. It functions in the pathway isoprenoid biosynthesis; isopentenyl diphosphate biosynthesis via DXP pathway; isopentenyl diphosphate from 1-deoxy-D-xylulose 5-phosphate: step 4/6. Involved in the biosynthesis of isopentenyl diphosphate (IPP) and dimethylallyl diphosphate (DMAPP), two major building blocks of isoprenoid compounds. Catalyzes the conversion of 4-diphosphocytidyl-2-C-methyl-D-erythritol 2-phosphate (CDP-ME2P) to 2-C-methyl-D-erythritol 2,4-cyclodiphosphate (ME-CPP) with a corresponding release of cytidine 5-monophosphate (CMP). This Bifidobacterium longum (strain NCC 2705) protein is 2-C-methyl-D-erythritol 2,4-cyclodiphosphate synthase.